Here is a 430-residue protein sequence, read N- to C-terminus: Adenylosuccinate synthetase (430 aa).

Residues 11 to 17 (GDEGKGK) and 39 to 41 (GHS) each bind GTP. The active-site Proton acceptor is the Asp12. The Mg(2+) site is built by Asp12 and Gly39. IMP-binding positions include 12 to 15 (DEGK), 37 to 40 (NAGH), Thr129, Arg143, Asn221, Thr236, and Arg300. Residue His40 is the Proton donor of the active site. A substrate-binding site is contributed by 296-302 (VSTGRKR). Residues Arg302, 328 to 330 (KLD), and 412 to 414 (GTG) contribute to the GTP site.

This sequence belongs to the adenylosuccinate synthetase family. In terms of assembly, homodimer. Mg(2+) is required as a cofactor.

Its subcellular location is the cytoplasm. It catalyses the reaction IMP + L-aspartate + GTP = N(6)-(1,2-dicarboxyethyl)-AMP + GDP + phosphate + 2 H(+). Its pathway is purine metabolism; AMP biosynthesis via de novo pathway; AMP from IMP: step 1/2. In terms of biological role, plays an important role in the de novo pathway and in the salvage pathway of purine nucleotide biosynthesis. Catalyzes the first committed step in the biosynthesis of AMP from IMP. In Neurospora crassa (strain ATCC 24698 / 74-OR23-1A / CBS 708.71 / DSM 1257 / FGSC 987), this protein is Adenylosuccinate synthetase.